The primary structure comprises 182 residues: Isopentenyl-diphosphate Delta-isomerase (182 aa).

2 residues coordinate Mn(2+): histidine 25 and histidine 32. In terms of domain architecture, Nudix hydrolase spans 30 to 164 (LLHLAFSSWL…PWAFSPWMVM (135 aa)). The active site involves cysteine 67. Histidine 69 contributes to the Mn(2+) binding site. Glutamate 87 contacts Mg(2+). Positions 114 and 116 each coordinate Mn(2+). Glutamate 116 is an active-site residue.

The protein belongs to the IPP isomerase type 1 family. In terms of assembly, homodimer. Mg(2+) is required as a cofactor. Mn(2+) serves as cofactor.

It is found in the cytoplasm. It carries out the reaction isopentenyl diphosphate = dimethylallyl diphosphate. The protein operates within isoprenoid biosynthesis; dimethylallyl diphosphate biosynthesis; dimethylallyl diphosphate from isopentenyl diphosphate: step 1/1. In terms of biological role, catalyzes the 1,3-allylic rearrangement of the homoallylic substrate isopentenyl (IPP) to its highly electrophilic allylic isomer, dimethylallyl diphosphate (DMAPP). The sequence is that of Isopentenyl-diphosphate Delta-isomerase from Escherichia coli O45:K1 (strain S88 / ExPEC).